We begin with the raw amino-acid sequence, 196 residues long: Nucleoid occlusion factor SlmA (196 aa).

An HTH tetR-type domain is found at 7–68 (TNRREEILQA…GLIEFIEEAL (62 aa)). The segment at residues 31–50 (TTAKLAKQVGVSEAALYRHF) is a DNA-binding region (H-T-H motif). Positions 110–142 (HALMFENERLRDRINQLFERIETQLRQILRERK) form a coiled coil.

It belongs to the nucleoid occlusion factor SlmA family. In terms of assembly, homodimer. Interacts with FtsZ.

It is found in the cytoplasm. It localises to the nucleoid. Its function is as follows. Required for nucleoid occlusion (NO) phenomenon, which prevents Z-ring formation and cell division over the nucleoid. Acts as a DNA-associated cell division inhibitor that binds simultaneously chromosomal DNA and FtsZ, and disrupts the assembly of FtsZ polymers. SlmA-DNA-binding sequences (SBS) are dispersed on non-Ter regions of the chromosome, preventing FtsZ polymerization at these regions. The protein is Nucleoid occlusion factor SlmA of Vibrio campbellii (strain ATCC BAA-1116).